The chain runs to 872 residues: Lysosomal cholesterol signaling protein (872 aa).

Residues 1–40 (MNSFSNLPAENLTIAVNMTKTLPTAVMHGFNSTNDPPSMS) are Lumenal-facing. Positions 3–372 (SFSNLPAENL…SAWLLTFPTM (370 aa)) are PIN-like transporter. 3 N-linked (GlcNAc...) asparagine glycosylation sites follow: asparagine 11, asparagine 17, and asparagine 31. Residues 41–61 (ITRLFPALLECFGIVLCGYIA) traverse the membrane as a helical segment. Cholesterol contacts are provided by phenylalanine 45 and tyrosine 59. The Cytoplasmic portion of the chain corresponds to 62–81 (GRANVITSTQAKGLGNFVSR). The helical transmembrane segment at 82-102 (FALPALLFKNMVVLNFSNVDW) threads the bilayer. Topologically, residues 103–106 (SFLY) are lumenal. A helical transmembrane segment spans residues 107-127 (SILIAKASVFFIVCVLTLLVA). The Cytoplasmic portion of the chain corresponds to 128 to 135 (SPDSRFSK). A discontinuously helical transmembrane segment spans residues 136 to 156 (AGLFPIFATQSNDFALGYPIV). Over 157–169 (EALYQTTYPEYLQ) the chain is Lumenal. A helical membrane pass occupies residues 170-190 (YIYLVAPISLMMLNPIGFIFC). The Cytoplasmic segment spans residues 191–215 (EIQKWKDTQNASQNKIKIVGLGLLR). Residues 216–236 (VLQNPIVFMVFIGIAFNFILD) form a discontinuously helical membrane-spanning segment. The Lumenal segment spans residues 237 to 245 (RKVPVYVEN). The chain crosses the membrane as a discontinuously helical span at residues 246–266 (FLDGLGNSFSGSALFYLGLTM). Residues 267 to 275 (VGKIKRLKK) are Cytoplasmic-facing. Residues glycine 268, lysine 269, and isoleucine 270 each contribute to the cholesterol site. A helical membrane pass occupies residues 276–296 (SAFVVLILLITAKLLVLPLLC). Residues 297–317 (REMVELLDKGDSVVNHTSLSN) lie on the Lumenal side of the membrane. Asparagine 311 carries N-linked (GlcNAc...) asparagine glycosylation. The discontinuously helical transmembrane segment at 318 to 338 (YAFLYGVFPVAPGVAIFATQF) threads the bilayer. Over 339–348 (NMEVEIITSG) the chain is Cytoplasmic. A helical transmembrane segment spans residues 349–369 (MVISTFVSAPIMYVSAWLLTF). Over 370-383 (PTMDPKPLAYAIQN) the chain is Lumenal. Residues 382–719 (QNVSFDISIV…FGIFGLDKHL (338 aa)) are GPCR. Asparagine 383 carries N-linked (GlcNAc...) asparagine glycosylation. A helical transmembrane segment spans residues 384–404 (VSFDISIVSLISLIWSQAILL). The Cytoplasmic segment spans residues 405-416 (LSKKYKQLPHML). A helical transmembrane segment spans residues 417–437 (TTNLLIAQSIVCAGMMIWNFV). Over 438 to 440 (KEK) the chain is Lumenal. A helical membrane pass occupies residues 441–461 (NFVGQILVFVLLYSSLYSTYL). The Cytoplasmic portion of the chain corresponds to 462–482 (WTGLLAISLFLLKKRERVQIP). The helical transmembrane segment at 483–503 (VGIIIISGWGIPALLVGVLLI) threads the bilayer. The Lumenal segment spans residues 504–522 (TGKHSGDSIDSAFFYGKEQ). A helical transmembrane segment spans residues 523 to 543 (MITTAVTLFCSILIAGISLMC). Residues 544 to 662 (MNRTAQAGSY…GDQQLTRHVL (119 aa)) are Cytoplasmic-facing. Arginine 659 contacts cholesterol. The helical transmembrane segment at 663 to 683 (LCLLLIIGLFANLSSCLWWLF) threads the bilayer. Over 684-693 (NQEPGRLYVE) the chain is Lumenal. A helical transmembrane segment spans residues 694–714 (LQFFCAVFNFGQGFISFGIFG). Topologically, residues 715–872 (LDKHLIILPF…SSPPSHSPKT (158 aa)) are cytoplasmic. In terms of domain architecture, DEP spans 759-837 (YHRDLCIRNI…DEYLFYRFLQ (79 aa)).

Homodimer; via the transporter region and DEP domain. Interacts with the GATOR1 complex; preventing interaction between GATOR1 and KICSTOR; interaction is disrupted upon cholesterol starvation.

The protein localises to the lysosome membrane. In terms of biological role, cholesterol-binding protein that acts as a regulator of mTORC1 signaling pathway. Acts as a sensor of cholesterol to signal cholesterol sufficiency to mTORC1: in presence of cholesterol, binds cholesterol, leading to disruption of the interaction between the GATOR1 and KICSTOR complexes and promotion of mTORC1 signaling. Upon cholesterol starvation, GPR155/LYCHOS is unable to perturb the association between GATOR1 and KICSTOR, leading to mTORC1 signaling inhibition. Binds indole-3-acetic acid and may play a role in tryptophan metabolism. In Pongo abelii (Sumatran orangutan), this protein is Lysosomal cholesterol signaling protein (GPR155).